The sequence spans 78 residues: Gas vesicle protein A (78 aa).

This sequence belongs to the gas vesicle GvpA family. As to quaternary structure, the gas vesicle shell is 2 nm thick and consists of a single layer of this protein. It forms helical ribs nearly perpendicular to the long axis of the vesicle.

It localises to the gas vesicle shell. Its function is as follows. Gas vesicles are hollow, gas filled proteinaceous nanostructures found in some microorganisms. During planktonic growth they allow positioning of the organism at a favorable depth for light or nutrient acquisition. GvpA forms the protein shell. The polypeptide is Gas vesicle protein A (Halorubrum vacuolatum (Natronobacterium vacuolatum)).